The primary structure comprises 863 residues: Leucine--tRNA ligase (863 aa).

The short motif at 42 to 52 (PYPSGKIHMGH) is the 'HIGH' region element. The 'KMSKS' region motif lies at 618–622 (KMSKS). Lys-621 provides a ligand contact to ATP.

The protein belongs to the class-I aminoacyl-tRNA synthetase family.

It is found in the cytoplasm. It catalyses the reaction tRNA(Leu) + L-leucine + ATP = L-leucyl-tRNA(Leu) + AMP + diphosphate. The chain is Leucine--tRNA ligase from Desulfatibacillum aliphaticivorans.